The primary structure comprises 121 residues: Small ribosomal subunit protein bS21m (121 aa).

The transit peptide at 1-14 directs the protein to the mitochondrion; the sequence is MNSSYFPGVLGVRW.

The protein belongs to the bacterial ribosomal protein bS21 family. Component of the mitochondrial small ribosomal subunit (mt-SSU). Mature yeast 74S mitochondrial ribosomes consist of a small (37S) and a large (54S) subunit. The 37S small subunit contains a 15S ribosomal RNA (15S mt-rRNA) and at least 32 different proteins. The 54S large subunit contains a 21S rRNA (21S mt-rRNA) and at least 45 different proteins.

The protein resides in the mitochondrion. In terms of biological role, component of the mitochondrial ribosome (mitoribosome), a dedicated translation machinery responsible for the synthesis of mitochondrial genome-encoded proteins, including at least some of the essential transmembrane subunits of the mitochondrial respiratory chain. The mitoribosomes are attached to the mitochondrial inner membrane and translation products are cotranslationally integrated into the membrane. The protein is Small ribosomal subunit protein bS21m (mrp21) of Schizosaccharomyces pombe (strain 972 / ATCC 24843) (Fission yeast).